A 624-amino-acid polypeptide reads, in one-letter code: Chaperone protein HtpG (624 aa).

Residues 1–336 form an a; substrate-binding region; sequence MKGQETRGFQ…SNDLPLNVSR (336 aa). Residues 337 to 552 are b; sequence EILQDSTVTR…ADEMSTQMAK (216 aa). A c region spans residues 553–624; it reads LFAAAGQSVP…IRRMNQLLVS (72 aa).

Belongs to the heat shock protein 90 family. As to quaternary structure, homodimer.

The protein resides in the cytoplasm. Functionally, molecular chaperone. Has ATPase activity. The protein is Chaperone protein HtpG of Salmonella typhi.